The sequence spans 491 residues: Probable glycine dehydrogenase (decarboxylating) subunit 2 (491 aa).

Position 273 is an N6-(pyridoxal phosphate)lysine (lysine 273).

The protein belongs to the GcvP family. C-terminal subunit subfamily. In terms of assembly, the glycine cleavage system is composed of four proteins: P, T, L and H. In this organism, the P 'protein' is a heterodimer of two subunits. Requires pyridoxal 5'-phosphate as cofactor.

It catalyses the reaction N(6)-[(R)-lipoyl]-L-lysyl-[glycine-cleavage complex H protein] + glycine + H(+) = N(6)-[(R)-S(8)-aminomethyldihydrolipoyl]-L-lysyl-[glycine-cleavage complex H protein] + CO2. In terms of biological role, the glycine cleavage system catalyzes the degradation of glycine. The P protein binds the alpha-amino group of glycine through its pyridoxal phosphate cofactor; CO(2) is released and the remaining methylamine moiety is then transferred to the lipoamide cofactor of the H protein. This chain is Probable glycine dehydrogenase (decarboxylating) subunit 2, found in Bacillus cytotoxicus (strain DSM 22905 / CIP 110041 / 391-98 / NVH 391-98).